A 123-amino-acid polypeptide reads, in one-letter code: Holo-[acyl-carrier-protein] synthase (123 aa).

Residues aspartate 8 and glutamate 55 each contribute to the Mg(2+) site.

This sequence belongs to the P-Pant transferase superfamily. AcpS family. Requires Mg(2+) as cofactor.

It localises to the cytoplasm. The catalysed reaction is apo-[ACP] + CoA = holo-[ACP] + adenosine 3',5'-bisphosphate + H(+). In terms of biological role, transfers the 4'-phosphopantetheine moiety from coenzyme A to a Ser of acyl-carrier-protein. The polypeptide is Holo-[acyl-carrier-protein] synthase (Caldicellulosiruptor saccharolyticus (strain ATCC 43494 / DSM 8903 / Tp8T 6331)).